The sequence spans 244 residues: Putative lipoprotein LprA (244 aa).

The signal sequence occupies residues 1–24 (MKHPPCSVVAAATAILAVVLAIGG). Cys25 is lipidated: N-palmitoyl cysteine. Cys25 is lipidated: S-diacylglycerol cysteine.

It belongs to the LppX/LprAFG lipoprotein family.

The protein localises to the cell membrane. In Mycobacterium tuberculosis (strain CDC 1551 / Oshkosh), this protein is Putative lipoprotein LprA (lprA).